The chain runs to 440 residues: Thymidine phosphorylase (440 aa).

The protein belongs to the thymidine/pyrimidine-nucleoside phosphorylase family. Homodimer.

The enzyme catalyses thymidine + phosphate = 2-deoxy-alpha-D-ribose 1-phosphate + thymine. It participates in pyrimidine metabolism; dTMP biosynthesis via salvage pathway; dTMP from thymine: step 1/2. The enzymes which catalyze the reversible phosphorolysis of pyrimidine nucleosides are involved in the degradation of these compounds and in their utilization as carbon and energy sources, or in the rescue of pyrimidine bases for nucleotide synthesis. This is Thymidine phosphorylase from Klebsiella pneumoniae subsp. pneumoniae (strain ATCC 700721 / MGH 78578).